The sequence spans 423 residues: Histidine--tRNA ligase (423 aa).

This sequence belongs to the class-II aminoacyl-tRNA synthetase family. In terms of assembly, homodimer.

It localises to the cytoplasm. The enzyme catalyses tRNA(His) + L-histidine + ATP = L-histidyl-tRNA(His) + AMP + diphosphate + H(+). This is Histidine--tRNA ligase from Laribacter hongkongensis (strain HLHK9).